The following is a 177-amino-acid chain: Large ribosomal subunit protein uL10 (177 aa).

It belongs to the universal ribosomal protein uL10 family. In terms of assembly, part of the ribosomal stalk of the 50S ribosomal subunit. The N-terminus interacts with L11 and the large rRNA to form the base of the stalk. The C-terminus forms an elongated spine to which L12 dimers bind in a sequential fashion forming a multimeric L10(L12)X complex.

In terms of biological role, forms part of the ribosomal stalk, playing a central role in the interaction of the ribosome with GTP-bound translation factors. This is Large ribosomal subunit protein uL10 from Variovorax paradoxus (strain S110).